A 449-amino-acid chain; its full sequence is GTPase Der (449 aa).

EngA-type G domains are found at residues 3–167 (AVIA…PTSE) and 178–351 (PRIA…IDSR). GTP is bound by residues 9 to 16 (GRPNVGKS), 56 to 60 (DTGGF), 119 to 122 (NKMD), 184 to 191 (GRPNVGKS), 231 to 235 (DTAGM), and 296 to 299 (NKWD). The KH-like domain maps to 352 to 436 (RHFSTAELNR…PLRLVFRQGE (85 aa)).

This sequence belongs to the TRAFAC class TrmE-Era-EngA-EngB-Septin-like GTPase superfamily. EngA (Der) GTPase family. Associates with the 50S ribosomal subunit.

GTPase that plays an essential role in the late steps of ribosome biogenesis. In Acidithiobacillus ferrooxidans (strain ATCC 23270 / DSM 14882 / CIP 104768 / NCIMB 8455) (Ferrobacillus ferrooxidans (strain ATCC 23270)), this protein is GTPase Der.